Here is a 114-residue protein sequence, read N- to C-terminus: Large ribosomal subunit protein bL19 (114 aa).

Belongs to the bacterial ribosomal protein bL19 family.

Its function is as follows. This protein is located at the 30S-50S ribosomal subunit interface and may play a role in the structure and function of the aminoacyl-tRNA binding site. The chain is Large ribosomal subunit protein bL19 from Bacillus cytotoxicus (strain DSM 22905 / CIP 110041 / 391-98 / NVH 391-98).